We begin with the raw amino-acid sequence, 575 residues long: Glutathione/L-cysteine transport system ATP-binding/permease protein CydD (575 aa).

The next 6 membrane-spanning stretches (helical) occupy residues 17-37 (LFVL…FLMF), 53-73 (ILLI…RSVS), 135-155 (IFPA…LGFF), 161-181 (ILLA…SLLV), 246-266 (FAAQ…TAGQ), and 275-295 (TMIA…LPLS). Positions 19–303 (VLVIFLGAVT…LSDALGEVPG (285 aa)) constitute an ABC transmembrane type-1 domain. An ABC transporter domain is found at 337–570 (LAFRDVTFSY…NERYRRLYHL (234 aa)). 370 to 377 (GRSGSGKS) provides a ligand contact to ATP.

This sequence belongs to the ABC transporter superfamily. Cysteine exporter (TC 3.A.1.129.1) family. In terms of assembly, forms a heterodimer with CydC.

It localises to the cell membrane. It carries out the reaction L-cysteine(in) + ATP + H2O = L-cysteine(out) + ADP + phosphate + H(+). The enzyme catalyses glutathione(in) + ATP + H2O = glutathione(out) + ADP + phosphate + H(+). Part of the ABC transporter complex CydDC that exports the reduced low-molecular-weight thiols cysteine and glutathione from the cell. Export of these thiol-containing redox-active molecules may be crucial for redox homeostasis, permitting correct assembly of various respiratory complexes and formation of correct disulfide bonds in secreted proteins. CydD contains transmembrane domains (TMD), which form a pore in the membrane, and an ATP-binding domain (NBD), which is responsible for energy generation. The protein is Glutathione/L-cysteine transport system ATP-binding/permease protein CydD (cydD) of Bacillus subtilis (strain 168).